The sequence spans 799 residues: Histidine biosynthesis trifunctional protein (799 aa).

The phosphoribosyl-AMP cyclohydrolase stretch occupies residues 1-229 (MVLPILPLID…FIVEQENVGF (229 aa)). Residues 230-312 (CHLETMSCFG…FYFALAKLVA (83 aa)) form a phosphoribosyl-ATP pyrophosphohydrolase region. The segment at 313-799 (NDVSLKDVEN…KLGLIPKDFQ (487 aa)) is histidinol dehydrogenase. Zn(2+)-binding residues include glutamine 618 and histidine 621. Active-site residues include glutamate 687 and histidine 688. Aspartate 721 and histidine 780 together coordinate Zn(2+).

The protein in the C-terminal section; belongs to the histidinol dehydrogenase family. Zn(2+) is required as a cofactor.

It carries out the reaction 1-(5-phospho-beta-D-ribosyl)-5'-AMP + H2O = 1-(5-phospho-beta-D-ribosyl)-5-[(5-phospho-beta-D-ribosylamino)methylideneamino]imidazole-4-carboxamide. The enzyme catalyses 1-(5-phospho-beta-D-ribosyl)-ATP + H2O = 1-(5-phospho-beta-D-ribosyl)-5'-AMP + diphosphate + H(+). It catalyses the reaction L-histidinol + 2 NAD(+) + H2O = L-histidine + 2 NADH + 3 H(+). Its pathway is amino-acid biosynthesis; L-histidine biosynthesis; L-histidine from 5-phospho-alpha-D-ribose 1-diphosphate: step 2/9. The protein operates within amino-acid biosynthesis; L-histidine biosynthesis; L-histidine from 5-phospho-alpha-D-ribose 1-diphosphate: step 3/9. It participates in amino-acid biosynthesis; L-histidine biosynthesis; L-histidine from 5-phospho-alpha-D-ribose 1-diphosphate: step 9/9. The chain is Histidine biosynthesis trifunctional protein from Saccharomyces cerevisiae (strain ATCC 204508 / S288c) (Baker's yeast).